Reading from the N-terminus, the 295-residue chain is MNTIIEEYLNFIQIEKGLSNNTIGAYRRDLKKYKDYLEDNKISHIDFIDRQIIQECLGHLIDMGQSSKSLARFISTIRSFHQFALREKYAAKDPTVLIETPKYEKKLPDVLEIDEVIALLETPDLTKNNGYRDRTMLELLYATGMRVTEIIQLDVEDVNLIMGFVRVFGKGNKERIVPLGDTVIEYLTTYIETVRPQLLKQTTTQALFLNMHGKSLSRQGIWKIIKQYGLKANINKTLTPHTLRHSFATHLLENGADLRAVQEMLGHSDISTTQLYTHVSKSQIRKMYTQFHPRA.

The region spanning M1–L85 is the Core-binding (CB) domain. Residues K106–T289 enclose the Tyr recombinase domain. Active-site residues include R146, K170, H241, R244, and H267. The O-(3'-phospho-DNA)-tyrosine intermediate role is filled by Y276.

The protein belongs to the 'phage' integrase family. XerD subfamily. As to quaternary structure, forms a cyclic heterotetrameric complex composed of two molecules of XerC and two molecules of XerD.

The protein resides in the cytoplasm. Its function is as follows. Site-specific tyrosine recombinase, which acts by catalyzing the cutting and rejoining of the recombining DNA molecules. The XerC-XerD complex is essential to convert dimers of the bacterial chromosome into monomers to permit their segregation at cell division. It also contributes to the segregational stability of plasmids. The protein is Tyrosine recombinase XerD of Staphylococcus epidermidis (strain ATCC 12228 / FDA PCI 1200).